The primary structure comprises 210 residues: Protein-L-isoaspartate O-methyltransferase (210 aa).

Residue Ser59 is part of the active site.

This sequence belongs to the methyltransferase superfamily. L-isoaspartyl/D-aspartyl protein methyltransferase family.

Its subcellular location is the cytoplasm. It carries out the reaction [protein]-L-isoaspartate + S-adenosyl-L-methionine = [protein]-L-isoaspartate alpha-methyl ester + S-adenosyl-L-homocysteine. Functionally, catalyzes the methyl esterification of L-isoaspartyl residues in peptides and proteins that result from spontaneous decomposition of normal L-aspartyl and L-asparaginyl residues. It plays a role in the repair and/or degradation of damaged proteins. The polypeptide is Protein-L-isoaspartate O-methyltransferase (Nitratidesulfovibrio vulgaris (strain ATCC 29579 / DSM 644 / CCUG 34227 / NCIMB 8303 / VKM B-1760 / Hildenborough) (Desulfovibrio vulgaris)).